Reading from the N-terminus, the 240-residue chain is Uridylate kinase (240 aa).

13–16 (KLSG) contacts ATP. Residues 21-26 (GDDGFG) are involved in allosteric activation by GTP. Glycine 55 contributes to the UMP binding site. Positions 56 and 60 each coordinate ATP. UMP is bound by residues aspartate 75 and 136 to 143 (IGNPYFST). The ATP site is built by asparagine 164, tyrosine 170, and aspartate 173.

The protein belongs to the UMP kinase family. In terms of assembly, homohexamer.

It localises to the cytoplasm. The catalysed reaction is UMP + ATP = UDP + ADP. It participates in pyrimidine metabolism; CTP biosynthesis via de novo pathway; UDP from UMP (UMPK route): step 1/1. Its activity is regulated as follows. Allosterically activated by GTP. Inhibited by UTP. In terms of biological role, catalyzes the reversible phosphorylation of UMP to UDP. The sequence is that of Uridylate kinase from Staphylococcus saprophyticus subsp. saprophyticus (strain ATCC 15305 / DSM 20229 / NCIMB 8711 / NCTC 7292 / S-41).